The chain runs to 386 residues: ATP phosphoribosyltransferase regulatory subunit (386 aa).

Belongs to the class-II aminoacyl-tRNA synthetase family. HisZ subfamily. In terms of assembly, heteromultimer composed of HisG and HisZ subunits.

Its subcellular location is the cytoplasm. The protein operates within amino-acid biosynthesis; L-histidine biosynthesis; L-histidine from 5-phospho-alpha-D-ribose 1-diphosphate: step 1/9. Its function is as follows. Required for the first step of histidine biosynthesis. May allow the feedback regulation of ATP phosphoribosyltransferase activity by histidine. The sequence is that of ATP phosphoribosyltransferase regulatory subunit from Variovorax paradoxus (strain S110).